A 220-amino-acid chain; its full sequence is Cysteine-rich venom protein VAR5 (220 aa).

The signal sequence occupies residues 1–22 (MILLKLYLTLAAILCQSRGTTS). Positions 41–169 (NKHNDLRRTV…PLKYFLVCQY (129 aa)) constitute an SCP domain. 5 cysteine pairs are disulfide-bonded: cysteine 77–cysteine 156, cysteine 95–cysteine 170, cysteine 151–cysteine 167, cysteine 189–cysteine 196, and cysteine 192–cysteine 201. A ShKT domain is found at 205–220 (CEHSNQYINCPDLTKQ).

This sequence belongs to the CRISP family. Post-translationally, contains 8 disulfide bonds. Expressed by the venom gland.

The protein resides in the secreted. In terms of biological role, blocks ryanodine receptors, and potassium channels. The protein is Cysteine-rich venom protein VAR5 of Varanus acanthurus (Ridge-tailed monitor).